A 254-amino-acid polypeptide reads, in one-letter code: MCSCLVVKNTVIGSGRTKIAVPLVARDAAELSAVLEQIKNMPFDIAEFRADFLECAGSIGEILHHTQTVRDALPDKPLLFTFRRHGEGGSFPCSDDYYFKLLDALIESRLPDIIDIELFSGETAVRRAVANAQKNGIAALLCNHEFHRTPPQEEIVCRLKQMEDCGADICKIAVMPQSAEDVLTLLSATLKAKELAAKPIVTMSMGQTGAVSRLAGQVFGSSITFGSGTQNSAPGQIGVSALRATLDCLENGAD.

Residues 47–49 (EFR) and R83 contribute to the 3-dehydroquinate site. H144 (proton donor/acceptor) is an active-site residue. K171 (schiff-base intermediate with substrate) is an active-site residue. 3-dehydroquinate is bound by residues R213, S232, and Q236.

This sequence belongs to the type-I 3-dehydroquinase family. In terms of assembly, homodimer.

It catalyses the reaction 3-dehydroquinate = 3-dehydroshikimate + H2O. It participates in metabolic intermediate biosynthesis; chorismate biosynthesis; chorismate from D-erythrose 4-phosphate and phosphoenolpyruvate: step 3/7. Involved in the third step of the chorismate pathway, which leads to the biosynthesis of aromatic amino acids. Catalyzes the cis-dehydration of 3-dehydroquinate (DHQ) and introduces the first double bond of the aromatic ring to yield 3-dehydroshikimate. In Neisseria meningitidis serogroup C / serotype 2a (strain ATCC 700532 / DSM 15464 / FAM18), this protein is 3-dehydroquinate dehydratase.